Consider the following 359-residue polypeptide: N-acetylneuraminate-9-phosphate synthase (359 aa).

N6-acetyllysine is present on residues lysine 61, lysine 74, and lysine 79. Serine 275 is modified (phosphoserine). Lysine 290 carries the N6-acetyllysine modification. The AFP-like domain maps to 294-353 (SVVAKVKIPEGTILTMDMLTVKVGEPKGYPPEDIFNLVGKKVLVTVEEDDTIMEELVDNH).

As to expression, ubiquitous.

The enzyme catalyses aldehydo-N-acetyl-D-mannosamine 6-phosphate + phosphoenolpyruvate + H2O = N-acetylneuraminate 9-phosphate + phosphate. It catalyses the reaction aldehydo-D-mannose 6-phosphate + phosphoenolpyruvate + H2O = 3-deoxy-D-glycero-beta-D-galacto-non-2-ulopyranosonate 9-phosphate + phosphate. Catalyzes the condensation of phosphoenolpyruvate (PEP) and N-acetylmannosamine 6-phosphate (ManNAc-6-P) to synthesize N-acetylneuraminate-9-phosphate (Neu5Ac-9-P). Also catalyzes the condensation of PEP and D-mannose 6-phosphate (Man-6-P) to produce 3-deoxy-D-glycero-beta-D-galacto-non-2-ulopyranosonate 9-phosphate (KDN-9-P). Neu5Ac-9-P and KDN-9-P are the phosphorylated forms of sialic acids N-acetylneuraminic acid (Neu5Ac) and deaminoneuraminic acid (KDN), respectively. Required for brain and skeletal development. This is N-acetylneuraminate-9-phosphate synthase from Homo sapiens (Human).